Reading from the N-terminus, the 446-residue chain is Phosphoglucosamine mutase (446 aa).

The Phosphoserine intermediate role is filled by Ser-102. Residues Ser-102, Asp-241, Asp-243, and Asp-245 each coordinate Mg(2+). Position 102 is a phosphoserine (Ser-102).

Belongs to the phosphohexose mutase family. Mg(2+) serves as cofactor. In terms of processing, activated by phosphorylation.

The enzyme catalyses alpha-D-glucosamine 1-phosphate = D-glucosamine 6-phosphate. In terms of biological role, catalyzes the conversion of glucosamine-6-phosphate to glucosamine-1-phosphate. The polypeptide is Phosphoglucosamine mutase (Yersinia pseudotuberculosis serotype O:1b (strain IP 31758)).